The primary structure comprises 770 residues: PH and SEC7 domain-containing protein 2 (770 aa).

Residues M1–E24 show a composition bias toward basic and acidic residues. Disordered stretches follow at residues M1–D65 and I181–C304. The span at Q32–I45 shows a compositional bias: polar residues. S188 is modified (phosphoserine). Composition is skewed to low complexity over residues L216–S234 and E285–S296. An SEC7 domain is found at D256–E459. The region spanning T509 to A622 is the PH domain. A helical transmembrane segment spans residues L619–M636. Positions R650–H677 form a coiled coil. The segment at P738–T770 is disordered.

This sequence belongs to the PSD family.

The protein resides in the cell membrane. It localises to the cell projection. The protein localises to the ruffle membrane. Its subcellular location is the cleavage furrow. The protein is PH and SEC7 domain-containing protein 2 (Psd2) of Mus musculus (Mouse).